Consider the following 1023-residue polypeptide: GATOR2 complex protein WDR24 (1023 aa).

WD repeat units lie at residues 16–54, 64–108, 114–154, 159–199, 203–243, 245–287, and 291–329; these read NLGS…FKVT, SLNY…SKSV, DHSR…NASK, PKSE…IAVE, SHQG…SLNN, STIS…IPLF, and DHRD…KPYQ. Residues 563–578 show a composition bias toward low complexity; it reads SKNIIDNSNDSNQEIN. Disordered regions lie at residues 563–621 and 661–824; these read SKNI…EPPS and QKST…SIEN. The span at 584-593 shows a compositional bias: acidic residues; sequence KEDEEEDDDN. Positions 661 to 681 are enriched in polar residues; that stretch reads QKSTDNISDNNSNVHVNIKRQ. The span at 682–695 shows a compositional bias: low complexity; sequence NQPTNNNNNNSNID. The segment covering 696-742 has biased composition (basic and acidic residues); it reads NLEKKSNKSKSTKENKESSLTDQNKQKRNDNKEKIDNNEIDNDNKDN. Acidic residues predominate over residues 743 to 759; it reads NDDDDNDVDNIGEDNDE. The span at 760 to 812 shows a compositional bias: low complexity; that stretch reads INNNNDNNNNNNNNNNNNNNNNNNNNNNNNNNNNNNNNKNNNNDNNNNNNINN. Residues 947 to 969 form a C4-type zinc finger; it reads ACSSCGKSIPQNSIICEKCNKAS. Residues Cys-948, Cys-951, Cys-962, Cys-965, Cys-972, Cys-975, Cys-986, Cys-989, His-991, His-994, His-997, Cys-1010, Cys-1014, His-1016, and Cys-1018 each contribute to the Zn(2+) site. The RING-type; atypical zinc-finger motif lies at 970 to 1021; it reads SKCSICRLPVKGMWVWCQGCGHGGHLEHMKSWFIDKNQKSCPTGCTHICTPF.

It belongs to the WD repeat WDR24 family. As to quaternary structure, probably part of the GATOR complex.

It localises to the lysosome membrane. It carries out the reaction S-ubiquitinyl-[E2 ubiquitin-conjugating enzyme]-L-cysteine + [acceptor protein]-L-lysine = [E2 ubiquitin-conjugating enzyme]-L-cysteine + N(6)-ubiquitinyl-[acceptor protein]-L-lysine.. It functions in the pathway protein modification; protein ubiquitination. As a component of the GATOR complex may function in the amino acid-sensing branch of the TORC1 signaling pathway. The chain is GATOR2 complex protein WDR24 from Dictyostelium discoideum (Social amoeba).